Consider the following 222-residue polypeptide: Thiopurine S-methyltransferase (222 aa).

Positions 10, 45, 66, and 126 each coordinate S-adenosyl-L-methionine.

The protein belongs to the class I-like SAM-binding methyltransferase superfamily. TPMT family.

Its subcellular location is the cytoplasm. The catalysed reaction is S-adenosyl-L-methionine + a thiopurine = S-adenosyl-L-homocysteine + a thiopurine S-methylether.. This Shewanella piezotolerans (strain WP3 / JCM 13877) protein is Thiopurine S-methyltransferase.